The following is a 122-amino-acid chain: Large ribosomal subunit protein uL14 (122 aa).

Belongs to the universal ribosomal protein uL14 family. As to quaternary structure, part of the 50S ribosomal subunit. Forms a cluster with proteins L3 and L19. In the 70S ribosome, L14 and L19 interact and together make contacts with the 16S rRNA in bridges B5 and B8.

In terms of biological role, binds to 23S rRNA. Forms part of two intersubunit bridges in the 70S ribosome. In Corynebacterium kroppenstedtii (strain DSM 44385 / JCM 11950 / CIP 105744 / CCUG 35717), this protein is Large ribosomal subunit protein uL14.